The primary structure comprises 87 residues: Small ribosomal subunit protein uS15 (87 aa).

The protein belongs to the universal ribosomal protein uS15 family. As to quaternary structure, part of the 30S ribosomal subunit. Forms a bridge to the 50S subunit in the 70S ribosome, contacting the 23S rRNA.

In terms of biological role, one of the primary rRNA binding proteins, it binds directly to 16S rRNA where it helps nucleate assembly of the platform of the 30S subunit by binding and bridging several RNA helices of the 16S rRNA. Its function is as follows. Forms an intersubunit bridge (bridge B4) with the 23S rRNA of the 50S subunit in the ribosome. The sequence is that of Small ribosomal subunit protein uS15 from Clostridium kluyveri (strain NBRC 12016).